The following is a 339-amino-acid chain: uncharacterized protein (339 aa).

One can recognise an ABC transporter domain in the interval 13–243 (LSLNKLDVGF…PATPFICEFI (231 aa)). Position 45-52 (45-52 (GPSGSGKS)) interacts with ATP.

This sequence belongs to the ABC transporter superfamily.

The protein resides in the cell inner membrane. Its function is as follows. Probably part of a binding-protein-dependent transport system y4fNOP. Probably responsible for energy coupling to the transport system. This is an uncharacterized protein from Sinorhizobium fredii (strain NBRC 101917 / NGR234).